Consider the following 162-residue polypeptide: 2-C-methyl-D-erythritol 2,4-cyclodiphosphate synthase (162 aa).

A divalent metal cation contacts are provided by Asp-10 and His-12. 4-CDP-2-C-methyl-D-erythritol 2-phosphate-binding positions include 10-12 and 36-37; these read DVH and HS. Position 44 (His-44) interacts with a divalent metal cation. 4-CDP-2-C-methyl-D-erythritol 2-phosphate is bound by residues 58–60, 63–67, and Arg-144; these read DIG and FSDTD.

The protein belongs to the IspF family. Homotrimer. It depends on a divalent metal cation as a cofactor.

The enzyme catalyses 4-CDP-2-C-methyl-D-erythritol 2-phosphate = 2-C-methyl-D-erythritol 2,4-cyclic diphosphate + CMP. The protein operates within isoprenoid biosynthesis; isopentenyl diphosphate biosynthesis via DXP pathway; isopentenyl diphosphate from 1-deoxy-D-xylulose 5-phosphate: step 4/6. Involved in the biosynthesis of isopentenyl diphosphate (IPP) and dimethylallyl diphosphate (DMAPP), two major building blocks of isoprenoid compounds. Catalyzes the conversion of 4-diphosphocytidyl-2-C-methyl-D-erythritol 2-phosphate (CDP-ME2P) to 2-C-methyl-D-erythritol 2,4-cyclodiphosphate (ME-CPP) with a corresponding release of cytidine 5-monophosphate (CMP). The polypeptide is 2-C-methyl-D-erythritol 2,4-cyclodiphosphate synthase (Burkholderia thailandensis (strain ATCC 700388 / DSM 13276 / CCUG 48851 / CIP 106301 / E264)).